The chain runs to 111 residues: MHGERPTLGDIVLNLHPEPVCLNCNEQLDSSDSEDDHEQDQLDSLHSREREQPTQQDLQVNLQSFKVVTRCVFCQCLVRLAVHCSITDITQFQQLLMGTLHIVCPNCAATE.

Residues Met-1–Ser-44 are E7 terminal domain. Positions Leu-22 to Glu-26 match the LXCXE motif; interaction with host RB1 and TMEM173/STING motif. The segment at Leu-28–Thr-54 is disordered. The segment covering Asp-29 to Glu-38 has biased composition (acidic residues). Residues Gln-39 to Gln-52 show a composition bias toward basic and acidic residues. A zinc finger lies at Cys-71 to Cys-107. The Nuclear export signal motif lies at Ile-89–Met-97.

The protein belongs to the papillomaviridae E7 protein family. As to quaternary structure, homodimer. Homooligomer. Interacts with host RB1; this interaction induces dissociation of RB1-E2F1 complex thereby disrupting RB1 activity. Interacts with host EP300; this interaction represses EP300 transcriptional activity. Interacts with protein E2; this interaction inhibits E7 oncogenic activity. Interacts with host TMEM173/STING; this interaction impairs the ability of TMEM173/STING to sense cytosolic DNA and promote the production of type I interferon (IFN-alpha and IFN-beta). Highly phosphorylated.

It is found in the host cytoplasm. The protein localises to the host nucleus. Plays a role in viral genome replication by driving entry of quiescent cells into the cell cycle. Stimulation of progression from G1 to S phase allows the virus to efficiently use the cellular DNA replicating machinery to achieve viral genome replication. E7 protein has both transforming and trans-activating activities. Induces the disassembly of the E2F1 transcription factor from RB1, with subsequent transcriptional activation of E2F1-regulated S-phase genes. Interferes with host histone deacetylation mediated by HDAC1 and HDAC2, leading to transcription activation. Also plays a role in the inhibition of both antiviral and antiproliferative functions of host interferon alpha. Interaction with host TMEM173/STING impairs the ability of TMEM173/STING to sense cytosolic DNA and promote the production of type I interferon (IFN-alpha and IFN-beta). This is Protein E7 from Homo sapiens (Human).